The following is an 83-amino-acid chain: MKLTCVVIVAVLFLTAWTFVMADDSRYGLKDLFPKARHEMKNPEASKLNKRDECFSPGTFCGIKPGLCCSAWCYSFFCLTLTF.

The N-terminal stretch at 1-22 is a signal peptide; it reads MKLTCVVIVAVLFLTAWTFVMA. The propeptide occupies 23–51; that stretch reads DDSRYGLKDLFPKARHEMKNPEASKLNKR. Intrachain disulfides connect Cys-54–Cys-69, Cys-61–Cys-73, and Cys-68–Cys-78. 4-hydroxyproline is present on residues Pro-57 and Pro-65.

The protein belongs to the conotoxin O1 superfamily. Expressed by the venom duct.

The protein resides in the secreted. Delta-conotoxins bind to site 6 of voltage-gated sodium channels (Nav) and inhibit the inactivation process. The chain is Delta-conotoxin-like Ac6.1 from Conus achatinus (Little frog cone).